Reading from the N-terminus, the 333-residue chain is Putative pectinesterase 14 (333 aa).

The N-terminal stretch at 1-16 (MLFFILFLSIISPIES) is a signal peptide. N-linked (GlcNAc...) asparagine glycosylation is found at Asn-108 and Asn-114. Thr-116 is a substrate binding site. N-linked (GlcNAc...) asparagine glycosylation is present at Asn-133. Gln-151 is a substrate binding site. Residue Asp-174 is the Proton donor of the active site. The Nucleophile role is filled by Asp-195. Arg-253 contributes to the substrate binding site. Residues Asn-302 and Asn-323 are each glycosylated (N-linked (GlcNAc...) asparagine).

Belongs to the pectinesterase family. In terms of tissue distribution, expressed in flower buds.

The protein localises to the secreted. It localises to the cell wall. The enzyme catalyses [(1-&gt;4)-alpha-D-galacturonosyl methyl ester](n) + n H2O = [(1-&gt;4)-alpha-D-galacturonosyl](n) + n methanol + n H(+). It functions in the pathway glycan metabolism; pectin degradation; 2-dehydro-3-deoxy-D-gluconate from pectin: step 1/5. Functionally, acts in the modification of cell walls via demethylesterification of cell wall pectin. The sequence is that of Putative pectinesterase 14 (PME14) from Arabidopsis thaliana (Mouse-ear cress).